Here is an 87-residue protein sequence, read N- to C-terminus: Small ribosomal subunit protein bS20 (87 aa).

Over residues 1–11 (MAHHKSAIKRI) the composition is skewed to basic residues. Positions 1 to 26 (MAHHKSAIKRIKQNEKRNARNRHQKS) are disordered.

It belongs to the bacterial ribosomal protein bS20 family.

Binds directly to 16S ribosomal RNA. This Trichlorobacter lovleyi (strain ATCC BAA-1151 / DSM 17278 / SZ) (Geobacter lovleyi) protein is Small ribosomal subunit protein bS20.